A 377-amino-acid polypeptide reads, in one-letter code: Nitric oxide reductase FlRd-NAD(+) reductase (377 aa).

Belongs to the FAD-dependent oxidoreductase family. It depends on FAD as a cofactor.

The protein localises to the cytoplasm. It carries out the reaction 2 reduced [nitric oxide reductase rubredoxin domain] + NAD(+) + H(+) = 2 oxidized [nitric oxide reductase rubredoxin domain] + NADH. The protein operates within nitrogen metabolism; nitric oxide reduction. Functionally, one of at least two accessory proteins for anaerobic nitric oxide (NO) reductase. Reduces the rubredoxin moiety of NO reductase. The polypeptide is Nitric oxide reductase FlRd-NAD(+) reductase (Salmonella newport (strain SL254)).